A 289-amino-acid chain; its full sequence is Phosphate import ATP-binding protein PstB 2 (289 aa).

The region spanning Leu37–Thr276 is the ABC transporter domain. An ATP-binding site is contributed by Gly69–Ser76.

Belongs to the ABC transporter superfamily. Phosphate importer (TC 3.A.1.7) family. The complex is composed of two ATP-binding proteins (PstB), two transmembrane proteins (PstC and PstA) and a solute-binding protein (PstS).

Its subcellular location is the cell inner membrane. The enzyme catalyses phosphate(out) + ATP + H2O = ADP + 2 phosphate(in) + H(+). Its function is as follows. Part of the ABC transporter complex PstSACB involved in phosphate import. Responsible for energy coupling to the transport system. In Trichormus variabilis (strain ATCC 29413 / PCC 7937) (Anabaena variabilis), this protein is Phosphate import ATP-binding protein PstB 2.